The sequence spans 373 residues: Ferroptosis suppressor protein 1 (373 aa).

G2 is lipidated: N-myristoyl glycine. A helical membrane pass occupies residues 7–27 (VESGALHVVIVGGGFGGIAAA). 6-hydroxy-FAD contacts are provided by residues 18–22 (GGGFG), R54, and V82. Position 168 is an N6-acetyllysine; by KAT2B (K168). D285 is a 6-hydroxy-FAD binding site.

This sequence belongs to the FAD-dependent oxidoreductase family. As to quaternary structure, interacts with importin subunits KPNA2 and IPO5; this interaction likely mediates the translocation into the nucleus upon oxidative stress. 6-hydroxy-FAD is required as a cofactor. In terms of processing, N-myristoylation at Gly-2 mediates the recruitment to lipid droplets and plasma membrane, enabling its anti-lipid peroxidation activity. Post-translationally, acetylation at Lys-168 prevents AIFM2 ubiquitination and degradation, thereby inhibiting ferroptosis. KAT2B mediates acetylation at Lys-168, while HDAC3 removes it. Ubiquitinated. AIFM2 undergoes 'Lys-29'-ubiquitination and proteasomal degradation, which is inhibited by acetylation at Lys-168. As to expression, detected in most normal tissues as two transcripts of 1.8 and 4.0 kb in length, respectively. Highly expressed in heart, moderately in liver and skeletal muscles, and expressed at low levels in placenta, lung, kidney, and pancreas. Both transcripts expressed following p53/TP53 induction. The shorter 1.8 kb transcript seems to be the major transcript in EB1 colon cancer cells.

The protein resides in the lipid droplet. Its subcellular location is the cell membrane. The protein localises to the cytoplasm. It localises to the mitochondrion membrane. It is found in the nucleus. It catalyses the reaction ubiquinone-10 + NADH + H(+) = ubiquinol-10 + NAD(+). It carries out the reaction phylloquinone + NADH + H(+) = phylloquinol + NAD(+). The catalysed reaction is menaquinone-4 + NADH + H(+) = menaquinol-4 + NAD(+). The enzyme catalyses menadione + NADH + H(+) = menadiol + NAD(+). Its activity is regulated as follows. The modification by 4-hydroxy-2-nonenal (HNE) adduction in mitochondria results in loss of the oxidoreductase activity and activation of a novel function in mitochondrial oxidative stress signaling. Functionally, a NAD(P)H-dependent oxidoreductase that acts as a key inhibitor of ferroptosis. At the plasma membrane, catalyzes reduction of coenzyme Q/ubiquinone-10 to ubiquinol-10, a lipophilic radical-trapping antioxidant that prevents lipid oxidative damage and consequently ferroptosis. Acts in parallel to GPX4 to suppress phospholipid peroxidation and ferroptosis. This anti-ferroptotic function is independent of cellular glutathione levels. Also acts as a potent radical-trapping antioxidant by mediating warfarin-resistant vitamin K reduction in the canonical vitamin K cycle: catalyzes NAD(P)H-dependent reduction of vitamin K (phylloquinone, menaquinone-4 and menadione) to hydroquinone forms. Hydroquinones act as potent radical-trapping antioxidants inhibitor of phospholipid peroxidation and ferroptosis. May play a role in mitochondrial stress signaling. Upon oxidative stress, associates with the lipid peroxidation end product 4-hydroxy-2-nonenal (HNE) forming a lipid adduct devoid of oxidoreductase activity, which then translocates from mitochondria into the nucleus triggering DNA damage and cell death. Capable of DNA binding in a non-sequence specific way. The chain is Ferroptosis suppressor protein 1 from Homo sapiens (Human).